The following is a 110-amino-acid chain: UPF0339 protein SO_3888 (110 aa).

2 tandem repeats follow at residues 10–58 and 61–109.

Belongs to the UPF0339 family. Duplicated subfamily.

This chain is UPF0339 protein SO_3888, found in Shewanella oneidensis (strain ATCC 700550 / JCM 31522 / CIP 106686 / LMG 19005 / NCIMB 14063 / MR-1).